We begin with the raw amino-acid sequence, 617 residues long: Formin-binding protein 1 (617 aa).

Residues 1–79 form a required for self-association and induction of membrane tubulation region; it reads MSWGTELWDQ…CKAFISNLNE (79 aa). The region spanning 1–264 is the F-BAR domain; it reads MSWGTELWDQ…AAESIDQKND (264 aa). An interaction with microtubules region spans residues 1–335; the sequence is MSWGTELWDQ…KKNKLMSLLT (335 aa). 2 positions are modified to N6-acetyllysine: lysine 66 and lysine 110. The stretch at 67–259 forms a coiled coil; it reads YTSCKAFISN…DGIVKAAESI (193 aa). The segment at 251-617 is required for self-association and induction of membrane tubulation; that stretch reads GIVKAAESID…VCLDKNAKDS (367 aa). Disordered regions lie at residues 280 to 315 and 333 to 366; these read GDIE…KFGG and LLTS…QKEP. Phosphoserine occurs at positions 296 and 299. Over residues 338 to 347 the composition is skewed to pro residues; it reads HQPPPPPPAS. A phosphoserine mark is found at serine 349 and serine 359. A coiled-coil region spans residues 398–490; sequence TPEDFSNLPP…EVEGRLPARS (93 aa). The interaction with RND2 stretch occupies residues 400-552; sequence EDFSNLPPEQ…FDDEEPLPAI (153 aa). The 78-residue stretch at 404–481 folds into the REM-1 domain; sequence NLPPEQRRKK…TQKFEAWLAE (78 aa). Positions 486 to 531 are disordered; the sequence is LPARSEQARRQSGLYDSQNPPTVNNCAQDRESPDGSYTEEQSQESE. An interaction with PDE6G region spans residues 495–617; the sequence is RQSGLYDSQN…VCLDKNAKDS (123 aa). Serine 497 bears the Phosphoserine mark. The span at 499–512 shows a compositional bias: polar residues; the sequence is LYDSQNPPTVNNCA. Tyrosine 500 bears the Phosphotyrosine mark. Residues 514–617 are required for interaction with TNKS; that stretch reads DRESPDGSYT…VCLDKNAKDS (104 aa). A Phosphoserine modification is found at serine 521. Residues 535-617 are interaction with DNM1 and DNM3; it reads LATDFDDEFD…VCLDKNAKDS (83 aa). The 62-residue stretch at 550-611 folds into the SH3 domain; it reads PAIGTCKALY…PTSYVEVCLD (62 aa). The interval 550-617 is interaction with ARHGAP17, DAAM1, DIAPH1 and DIAPH2; the sequence is PAIGTCKALY…VCLDKNAKDS (68 aa). Residues 553 to 609 are interaction with DNM2 and WASL; it reads GTCKALYTFEGQNEGTISVVEGETLYVIEEDKGDGWTRIRRNEDEEGYVPTSYVEVC. The segment at 553-610 is interaction with FASLG; it reads GTCKALYTFEGQNEGTISVVEGETLYVIEEDKGDGWTRIRRNEDEEGYVPTSYVEVCL.

It belongs to the FNBP1 family. In terms of assembly, interacts specifically with GTP-bound RND2 and CDC42. Interacts with PDE6G and microtubules. Homodimerizes, the dimers can polymerize end-to-end to form filamentous structures. Interacts with AKAP9, ARHGAP17, DAAM1, DIAPH1, DIAPH2, DNM1, DNM2, DNM3, FASLG/FASL, SNX2 and WASL/N-WASP. May interact with TNKS. As to expression, very highly expressed in the epithelial cells of the gastrointestinal tract, respiratory, reproductive and urinary systems. Also highly expressed in brown adipose tissue, cardiomyocytes, enteric ganglia and glucagon producing cells of the pancreas. Expressed in germ cells of the testis and all regions of the brain.

It localises to the cytoplasm. Its subcellular location is the cytoskeleton. The protein resides in the cell cortex. The protein localises to the lysosome. It is found in the cytoplasmic vesicle. It localises to the cell membrane. Its subcellular location is the membrane. The protein resides in the clathrin-coated pit. May act as a link between RND2 signaling and regulation of the actin cytoskeleton. Required to coordinate membrane tubulation with reorganization of the actin cytoskeleton during the late stage of clathrin-mediated endocytosis. Binds to lipids such as phosphatidylinositol 4,5-bisphosphate and phosphatidylserine and promotes membrane invagination and the formation of tubules. Also enhances actin polymerization via the recruitment of WASL/N-WASP, which in turn activates the Arp2/3 complex. Actin polymerization may promote the fission of membrane tubules to form endocytic vesicles. May be required for the lysosomal retention of FASLG/FASL. In Homo sapiens (Human), this protein is Formin-binding protein 1 (FNBP1).